Reading from the N-terminus, the 374-residue chain is uncharacterized protein (374 aa).

A helical transmembrane segment spans residues 27–49 (AISPILALLIVLGVTIVVGAVFY).

The protein resides in the membrane. This is an uncharacterized protein from Methanocaldococcus jannaschii (strain ATCC 43067 / DSM 2661 / JAL-1 / JCM 10045 / NBRC 100440) (Methanococcus jannaschii).